The following is a 159-amino-acid chain: CASP-like protein 5C1 (159 aa).

The Cytoplasmic segment spans residues 1–6 (MDNGDR). The chain crosses the membrane as a helical span at residues 7 to 29 (SGAGAGAVGSAGSLGLRVGQAVF). The Extracellular segment spans residues 30-48 (SSASLLFMSVGVEFFSYTA). Residues 49-69 (FCFLVTIMGLVIPWSCTLAMI) form a helical membrane-spanning segment. Residues 70-94 (DVYSVFVGCPLRVPGVMVIVVVGDC) are Cytoplasmic-facing. A helical membrane pass occupies residues 95-117 (ALSIVSFAAACSSAAVIDLLLQL). Topologically, residues 118–134 (HGSHSSPTFCGRYQLSA) are extracellular. Residues 135-155 (MMAFLSWLLMAASATFNLWFV) traverse the membrane as a helical segment. Residues 156–159 (ASRW) lie on the Cytoplasmic side of the membrane.

Belongs to the Casparian strip membrane proteins (CASP) family. In terms of assembly, homodimer and heterodimers.

The protein resides in the cell membrane. The protein is CASP-like protein 5C1 of Zea mays (Maize).